The following is a 319-amino-acid chain: Cytochrome c biogenesis protein CcsA (319 aa).

The next 7 helical transmembrane spans lie at 17–37 (TISI…LGGL), 44–64 (GMIV…ASSG), 68–88 (LSNL…LHTI), 143–163 (MLLS…ILII), 223–243 (VISL…VWAN), 257–271 (TWAF…IYLH), and 286–306 (VASI…LLGI).

It belongs to the CcmF/CycK/Ccl1/NrfE/CcsA family. As to quaternary structure, may interact with Ccs1.

It is found in the plastid. The protein localises to the chloroplast thylakoid membrane. Its function is as follows. Required during biogenesis of c-type cytochromes (cytochrome c6 and cytochrome f) at the step of heme attachment. This is Cytochrome c biogenesis protein CcsA from Lolium perenne (Perennial ryegrass).